A 256-amino-acid polypeptide reads, in one-letter code: Thiazole synthase (256 aa).

Catalysis depends on lysine 96, which acts as the Schiff-base intermediate with DXP. 1-deoxy-D-xylulose 5-phosphate-binding positions include glycine 157, 183-184 (AG), and 205-206 (NT).

The protein belongs to the ThiG family. As to quaternary structure, homotetramer. Forms heterodimers with either ThiH or ThiS.

Its subcellular location is the cytoplasm. It catalyses the reaction [ThiS sulfur-carrier protein]-C-terminal-Gly-aminoethanethioate + 2-iminoacetate + 1-deoxy-D-xylulose 5-phosphate = [ThiS sulfur-carrier protein]-C-terminal Gly-Gly + 2-[(2R,5Z)-2-carboxy-4-methylthiazol-5(2H)-ylidene]ethyl phosphate + 2 H2O + H(+). Its pathway is cofactor biosynthesis; thiamine diphosphate biosynthesis. Functionally, catalyzes the rearrangement of 1-deoxy-D-xylulose 5-phosphate (DXP) to produce the thiazole phosphate moiety of thiamine. Sulfur is provided by the thiocarboxylate moiety of the carrier protein ThiS. In vitro, sulfur can be provided by H(2)S. The sequence is that of Thiazole synthase from Bacillus cereus (strain G9842).